Reading from the N-terminus, the 244-residue chain is Lipoprotein-releasing system ATP-binding protein LolD (244 aa).

The ABC transporter domain maps to 19 to 244 (IRAEALAKTY…KLRELAPSAV (226 aa)). 55–62 (GASGAGKS) serves as a coordination point for ATP.

Belongs to the ABC transporter superfamily. Lipoprotein translocase (TC 3.A.1.125) family. In terms of assembly, the complex is composed of two ATP-binding proteins (LolD) and two transmembrane proteins (LolC and LolE).

Its subcellular location is the cell inner membrane. In terms of biological role, part of the ABC transporter complex LolCDE involved in the translocation of mature outer membrane-directed lipoproteins, from the inner membrane to the periplasmic chaperone, LolA. Responsible for the formation of the LolA-lipoprotein complex in an ATP-dependent manner. The sequence is that of Lipoprotein-releasing system ATP-binding protein LolD from Xanthomonas axonopodis pv. citri (strain 306).